Consider the following 754-residue polypeptide: tRNA 5-methylaminomethyl-2-thiouridine biosynthesis bifunctional protein MnmC (754 aa).

The tract at residues methionine 1–serine 320 is tRNA (mnm(5)s(2)U34)-methyltransferase. Residues isoleucine 324 to cysteine 754 form an FAD-dependent cmnm(5)s(2)U34 oxidoreductase region.

It in the N-terminal section; belongs to the methyltransferase superfamily. tRNA (mnm(5)s(2)U34)-methyltransferase family. In the C-terminal section; belongs to the DAO family. It depends on FAD as a cofactor.

The protein resides in the cytoplasm. It catalyses the reaction 5-aminomethyl-2-thiouridine(34) in tRNA + S-adenosyl-L-methionine = 5-methylaminomethyl-2-thiouridine(34) in tRNA + S-adenosyl-L-homocysteine + H(+). In terms of biological role, catalyzes the last two steps in the biosynthesis of 5-methylaminomethyl-2-thiouridine (mnm(5)s(2)U) at the wobble position (U34) in tRNA. Catalyzes the FAD-dependent demodification of cmnm(5)s(2)U34 to nm(5)s(2)U34, followed by the transfer of a methyl group from S-adenosyl-L-methionine to nm(5)s(2)U34, to form mnm(5)s(2)U34. This is tRNA 5-methylaminomethyl-2-thiouridine biosynthesis bifunctional protein MnmC from Shewanella denitrificans (strain OS217 / ATCC BAA-1090 / DSM 15013).